The primary structure comprises 587 residues: Succinate dehydrogenase flavoprotein subunit (587 aa).

FAD is bound by residues 15–20, 39–54, and Asp-223; these read GAGGAG and SKVF…AQGG. At His-47 the chain carries Tele-8alpha-FAD histidine. The substrate site is built by His-244 and Thr-256. Residue Arg-288 is the Proton acceptor of the active site. His-355 is a binding site for substrate. Glu-389 provides a ligand contact to FAD. Arg-400 is a binding site for substrate. 405 to 406 serves as a coordination point for FAD; sequence SL.

This sequence belongs to the FAD-dependent oxidoreductase 2 family. FRD/SDH subfamily. As to quaternary structure, part of an enzyme complex containing four subunits: a flavoprotein, an iron-sulfur protein, cytochrome b-556 and a hydrophobic protein. FAD is required as a cofactor.

It localises to the cell inner membrane. It carries out the reaction a quinone + succinate = fumarate + a quinol. The protein operates within carbohydrate metabolism; tricarboxylic acid cycle; fumarate from succinate (bacterial route): step 1/1. The protein is Succinate dehydrogenase flavoprotein subunit (sdhA) of Coxiella burnetii (strain RSA 493 / Nine Mile phase I).